Here is a 206-residue protein sequence, read N- to C-terminus: Small ribosomal subunit protein uS2 (206 aa).

This sequence belongs to the universal ribosomal protein uS2 family.

This chain is Small ribosomal subunit protein uS2, found in Methanothrix thermoacetophila (strain DSM 6194 / JCM 14653 / NBRC 101360 / PT) (Methanosaeta thermophila).